We begin with the raw amino-acid sequence, 272 residues long: Phosphatidylglycerol--prolipoprotein diacylglyceryl transferase (272 aa).

Helical transmembrane passes span 15 to 35, 53 to 73, 90 to 110, and 117 to 137; these read LGPLYVHMYSVFMLAGALVLF, AFAVTSLLIPVILGARLWHVV, IWEGGLGFIGGVFSGLICFFV, and VPPFTFLDALAPGILAALCFA. Residue R138 participates in a 1,2-diacyl-sn-glycero-3-phospho-(1'-sn-glycerol) binding. A run of 3 helical transmembrane segments spans residues 174–194, 199–219, and 237–257; these read FHPIFLYEIILNVFIIVILLV, VFVKTVFPKGSVFAAFLVLYG, and FGLDLNYVGAAAMIIVGVLIA.

The protein belongs to the Lgt family.

The protein localises to the cell membrane. It carries out the reaction L-cysteinyl-[prolipoprotein] + a 1,2-diacyl-sn-glycero-3-phospho-(1'-sn-glycerol) = an S-1,2-diacyl-sn-glyceryl-L-cysteinyl-[prolipoprotein] + sn-glycerol 1-phosphate + H(+). Its pathway is protein modification; lipoprotein biosynthesis (diacylglyceryl transfer). Functionally, catalyzes the transfer of the diacylglyceryl group from phosphatidylglycerol to the sulfhydryl group of the N-terminal cysteine of a prolipoprotein, the first step in the formation of mature lipoproteins. This chain is Phosphatidylglycerol--prolipoprotein diacylglyceryl transferase, found in Tropheryma whipplei (strain Twist) (Whipple's bacillus).